A 283-amino-acid polypeptide reads, in one-letter code: Nucleotide-binding protein Sama_3091 (283 aa).

8-15 (GRSGSGKS) contacts ATP. Position 56–59 (56–59 (DIRN)) interacts with GTP.

The protein belongs to the RapZ-like family.

Displays ATPase and GTPase activities. This chain is Nucleotide-binding protein Sama_3091, found in Shewanella amazonensis (strain ATCC BAA-1098 / SB2B).